The following is a 110-amino-acid chain: Large ribosomal subunit protein uL22 (110 aa).

The segment covering 85–95 (RGTASKIRKPT) has biased composition (basic residues). Residues 85 to 110 (RGTASKIRKPTSHVMVEVSKAQKKEA) form a disordered region.

Belongs to the universal ribosomal protein uL22 family. As to quaternary structure, part of the 50S ribosomal subunit.

This protein binds specifically to 23S rRNA; its binding is stimulated by other ribosomal proteins, e.g. L4, L17, and L20. It is important during the early stages of 50S assembly. It makes multiple contacts with different domains of the 23S rRNA in the assembled 50S subunit and ribosome. Its function is as follows. The globular domain of the protein is located near the polypeptide exit tunnel on the outside of the subunit, while an extended beta-hairpin is found that lines the wall of the exit tunnel in the center of the 70S ribosome. The sequence is that of Large ribosomal subunit protein uL22 from Campylobacter curvus (strain 525.92).